The primary structure comprises 306 residues: Methionyl-tRNA formyltransferase (306 aa).

Residue 110–113 coordinates (6S)-5,6,7,8-tetrahydrofolate; the sequence is SLLP.

The protein belongs to the Fmt family.

The enzyme catalyses L-methionyl-tRNA(fMet) + (6R)-10-formyltetrahydrofolate = N-formyl-L-methionyl-tRNA(fMet) + (6S)-5,6,7,8-tetrahydrofolate + H(+). Its function is as follows. Attaches a formyl group to the free amino group of methionyl-tRNA(fMet). The formyl group appears to play a dual role in the initiator identity of N-formylmethionyl-tRNA by promoting its recognition by IF2 and preventing the misappropriation of this tRNA by the elongation apparatus. This Brucella melitensis biotype 2 (strain ATCC 23457) protein is Methionyl-tRNA formyltransferase.